Here is a 309-residue protein sequence, read N- to C-terminus: Olfactory receptor-like protein OLF4 (309 aa).

The Extracellular portion of the chain corresponds to 1–25; sequence MELENDTRIPEFLLLGFSEEPKLQP. N5 is a glycosylation site (N-linked (GlcNAc...) asparagine). Residues 26–49 traverse the membrane as a helical segment; the sequence is FLFGLFLSMYLVTILGNLLLILAV. Residues 50-57 lie on the Cytoplasmic side of the membrane; it reads SSDSHLHT. The helical transmembrane segment at 58 to 79 threads the bilayer; the sequence is PMYFFLANLSFVDICFTCTTIP. Residues 80-100 lie on the Extracellular side of the membrane; sequence KMLVNIQTQRKVITYESCIIQ. The helical transmembrane segment at 101–120 threads the bilayer; that stretch reads MYFFELFAGIDNFLLTVMAY. The Cytoplasmic segment spans residues 121–139; sequence DRYMAICYPLHYMVIMNPQ. Residues 140–158 traverse the membrane as a helical segment; sequence LCSLLLLVSWIMSALHSLL. At 159–196 the chain is on the extracellular side; sequence QTLMVLRLSFCTHFQIPHFFCELNQMIQLACSDTFLNN. A helical transmembrane segment spans residues 197–219; that stretch reads MMLYFAAILLGVAPLVGVLYSYF. Residues 220–236 lie on the Cytoplasmic side of the membrane; it reads KIVSSIRGISSAHSKYK. Residues 237–260 traverse the membrane as a helical segment; it reads AFSTCASHLSVVSLFYCTSLGVYL. Over 261–272 the chain is Extracellular; sequence SSAAPQSTHTSS. The helical transmembrane segment at 273-292 threads the bilayer; the sequence is VASVMYTVVTPMLNPFIYSL. Topologically, residues 293-309 are cytoplasmic; that stretch reads RNKDIKGALNVFFRGKP.

Belongs to the G-protein coupled receptor 1 family.

The protein resides in the cell membrane. In terms of biological role, putative odorant or sperm cell receptor. The sequence is that of Olfactory receptor-like protein OLF4 from Canis lupus familiaris (Dog).